A 163-amino-acid chain; its full sequence is uncharacterized protein (163 aa).

2 disordered regions span residues 1-78 (MHSL…NPHS) and 115-163 (PKWL…LPCH).

This is an uncharacterized protein from Homo sapiens (Human).